Reading from the N-terminus, the 234-residue chain is UPF0173 metal-dependent hydrolase Smed_0942 (234 aa).

The protein belongs to the UPF0173 family.

This is UPF0173 metal-dependent hydrolase Smed_0942 from Sinorhizobium medicae (strain WSM419) (Ensifer medicae).